The chain runs to 609 residues: Alpha-fetoprotein (609 aa).

The signal sequence occupies residues Met1–Ser18. Albumin domains follow at residues Arg19–Thr210, Lys211–Gln402, and Lys403–Ser601. Residue His22 coordinates Cu(2+). Cystine bridges form between Cys99–Cys114, Cys113–Cys124, Cys148–Cys193, Cys192–Cys201, Cys224–Cys270, Cys269–Cys277, Cys289–Cys303, and Cys302–Cys313. 2 positions are modified to phosphoserine: Ser111 and Ser115. N-linked (GlcNAc...) asparagine glycosylation is present at Asn251. Ser344 bears the Phosphoserine mark. Disulfide bonds link Cys384–Cys393, Cys416–Cys462, Cys461–Cys472, Cys485–Cys501, Cys500–Cys511, Cys538–Cys583, and Cys582–Cys591.

This sequence belongs to the ALB/AFP/VDB family. Dimeric and trimeric forms have been found in addition to the monomeric form. Post-translationally, sulfated. As to expression, plasma.

The protein localises to the secreted. Binds copper, nickel, and fatty acids as well as, and bilirubin less well than, serum albumin. The protein is Alpha-fetoprotein (AFP) of Equus caballus (Horse).